Reading from the N-terminus, the 371-residue chain is Chitin deacetylase (371 aa).

An N-terminal signal peptide occupies residues 1–20 (MLCRLFTLFITAALACCVAA). The interval 73-112 (PKPEPEPTAVPTMAPEPTTVPPTEPSGTYPPETTPTVEPT) is disordered. Composition is skewed to low complexity over residues 79–89 (PTAVPTMAPEP) and 102–112 (PPETTPTVEPT). The cysteines at positions 164 and 358 are disulfide-linked. An N-linked (GlcNAc...) asparagine glycan is attached at Asn-167. The region spanning 168-353 (GTIALTFDDG…EIKKRGLRAV (186 aa)) is the NodB homology domain. Asp-175 serves as the catalytic Proton acceptor. Residue Asp-175 participates in acetate binding. 3 residues coordinate Co(2+): Asp-176, His-228, and His-232. N-linked (GlcNAc...) asparagine glycosylation occurs at Asn-239. Position 270 (Tyr-270) interacts with acetate. The Proton donor role is filled by His-327.

Belongs to the polysaccharide deacetylase family. The cofactor is Co(2+).

It carries out the reaction [(1-&gt;4)-N-acetyl-beta-D-glucosaminyl](n) + n H2O = chitosan + n acetate. In terms of biological role, hydrolyzes the N-acetamido groups of N-acetyl-D-glucosamine residues in chitin to form chitosan and acetate. This is Chitin deacetylase from Arthroderma benhamiae (strain ATCC MYA-4681 / CBS 112371) (Trichophyton mentagrophytes).